Consider the following 199-residue polypeptide: Phosphatidylethanolamine N-methyltransferase (199 aa).

The Lumenal segment spans residues 1 to 12; that stretch reads MTRLLGYVDPLD. The helical intramembrane region spans 13 to 33; that stretch reads PSFVAAVITITFNPLYWNVVA. Residues 34 to 45 are Lumenal-facing; sequence RWEHKTRKLSRA. A helical transmembrane segment spans residues 46–66; the sequence is FGSPYLACYSLSVTILLLNFL. The Cytoplasmic portion of the chain corresponds to 67 to 93; that stretch reads RSHCFTQAMLSQPRMESLDTPAAYSLG. Residues 94 to 114 traverse the membrane as a helical segment; sequence LALLGLGVVLVLSSFFALGFA. 98–100 provides a ligand contact to S-adenosyl-L-methionine; that stretch reads GLG. The Lumenal segment spans residues 115–157; the sequence is GTFLGDYFGILKEARVTVFPFNILDNPMYWGSTANYLGWAIMH. Residues 158–178 traverse the membrane as a helical segment; the sequence is ASPTGLLLTVLVALTYIVALL. Over 179 to 199 the chain is Cytoplasmic; that stretch reads YEEPFTAEIYRQKASGSHKRS. Position 180–181 (180–181) interacts with S-adenosyl-L-methionine; it reads EE.

The protein belongs to the class VI-like SAM-binding methyltransferase superfamily. PEMT/PEM2 methyltransferase family. Isoform 2 is N-glycosylated with high-mannose oligosaccharides. In terms of tissue distribution, primarily expressed in liver (at protein level).

It is found in the endoplasmic reticulum. The protein resides in the endoplasmic reticulum membrane. Its subcellular location is the mitochondrion membrane. The catalysed reaction is a 1,2-diacyl-sn-glycero-3-phospho-N-methylethanolamine + S-adenosyl-L-methionine = a 1,2-diacyl-sn-glycero-3-phospho-N,N-dimethylethanolamine + S-adenosyl-L-homocysteine + H(+). It carries out the reaction a 1,2-diacyl-sn-glycero-3-phospho-N,N-dimethylethanolamine + S-adenosyl-L-methionine = a 1,2-diacyl-sn-glycero-3-phosphocholine + S-adenosyl-L-homocysteine + H(+). The enzyme catalyses a 1,2-diacyl-sn-glycero-3-phosphoethanolamine + S-adenosyl-L-methionine = a 1,2-diacyl-sn-glycero-3-phospho-N-methylethanolamine + S-adenosyl-L-homocysteine + H(+). It catalyses the reaction 1,2-di-(9Z-octadecenoyl)-sn-glycero-3-phosphoethanolamine + S-adenosyl-L-methionine = 1,2-di-(9Z-octadecenoyl)-sn-glycero-3-phospho-N-methylethanolamine + S-adenosyl-L-homocysteine + H(+). The catalysed reaction is 1,2-di-(9Z-octadecenoyl)-sn-glycero-3-phospho-N-methylethanolamine + S-adenosyl-L-methionine = 1,2-di-(9Z-octadecenoyl)-sn-glycero-3-phospho-N,N-dimethylethanolamine + S-adenosyl-L-homocysteine + H(+). It carries out the reaction 1,2-di-(9Z-octadecenoyl)-sn-glycero-3-phospho-N,N-dimethylethanolamine + S-adenosyl-L-methionine = 1,2-di-(9Z-octadecenoyl)-sn-glycero-3-phosphocholine + S-adenosyl-L-homocysteine + H(+). The enzyme catalyses 1,2-di-(9Z,12Z-octadecadienoyl)-sn-glycero-3-phosphoethanolamine + S-adenosyl-L-methionine = 1,2-di-(9Z,12Z-octadecadienoyl)-sn-glycero-3-phospho-N-methylethanolamine + S-adenosyl-L-homocysteine + H(+). It catalyses the reaction 1,2-di-(9Z,12Z-octadecadienoyl)-sn-glycero-3-phospho-N-methylethanolamine + S-adenosyl-L-methionine = 1,2-di-(9Z,12Z-octadecadienoyl)-sn-glycero-3-phospho-N,N-dimethylethanolamine + S-adenosyl-L-homocysteine + H(+). The catalysed reaction is 1,2-di-(9Z,12Z-octadecadienoyl)-sn-glycero-3-phospho-N,N-dimethylethanolamine + S-adenosyl-L-methionine = 1,2-di-(9Z,12Z-octadecadienoyl)-sn-glycero-3-phosphocholine + S-adenosyl-L-homocysteine + H(+). It carries out the reaction 1,2-di-(9Z,12Z,15Z-octadecatrienoyl)-sn-glycero-3-phosphoethanolamine + S-adenosyl-L-methionine = 1,2-di-(9Z,12Z,15Z-octadecatrienoyl)-sn-glycero-3-phospho-N-methylethanolamine + S-adenosyl-L-homocysteine + H(+). The enzyme catalyses 1,2-di-(9Z,12Z,15Z-octadecatrienoyl)-sn-glycero-3-phospho-N-methylethanolamine + S-adenosyl-L-methionine = 1,2-di-(9Z,12Z,15Z-octadecatrienoyl)-sn-glycero-3-phospho-N,N-dimethylethanolamine + S-adenosyl-L-homocysteine + H(+). It catalyses the reaction 1,2-di-(9Z,12Z,15Z-octadecatrienoyl)-sn-glycero-3-phospho-N,N-dimethylethanolamine + S-adenosyl-L-methionine = 1,2-di-(9Z,12Z,15Z-octadecatrienoyl)-sn-glycero-3-phosphocholine + S-adenosyl-L-homocysteine + H(+). The catalysed reaction is 1-hexadecanoyl-2-(4Z,7Z,10Z,13Z,16Z,19Z-docosahexaenoyl)-sn-glycero-3-phosphoethanolamine + S-adenosyl-L-methionine = 1-hexadecanoyl-2-(4Z,7Z,10Z,13Z,16Z,19Z-docosahexaenoyl)-sn-glycero-3-phospho-N-methylethanolamine + S-adenosyl-L-homocysteine + H(+). It carries out the reaction 1-hexadecanoyl-2-(4Z,7Z,10Z,13Z,16Z,19Z-docosahexaenoyl)-sn-glycero-3-phospho-N-methylethanolamine + S-adenosyl-L-methionine = 1-hexadecanoyl-2-(4Z,7Z,10Z,13Z,16Z,19Z-docosahexaenoyl)-sn-glycero-3-phospho-N,N-dimethylethanolamine + S-adenosyl-L-homocysteine + H(+). The enzyme catalyses 1-hexadecanoyl-2-(4Z,7Z,10Z,13Z,16Z,19Z-docosahexaenoyl)-sn-glycero-3-phospho-N,N-dimethylethanolamine + S-adenosyl-L-methionine = 1-hexadecanoyl-2-(4Z,7Z,10Z,13Z,16Z,19Z-docosahexaenoyl)-sn-glycero-3-phosphocholine + S-adenosyl-L-homocysteine + H(+). It participates in phospholipid metabolism; phosphatidylcholine biosynthesis. Its activity is regulated as follows. The first methylation is rate-limiting. Catalyzes the three sequential steps of the methylation pathway for the biosynthesis of phosphatidylcholine, a critical and essential component for membrane structure. Uses S-adenosylmethionine (S-adenosyl-L-methionine, SAM or AdoMet) as the methyl group donor for the methylation of phosphatidylethanolamine (1,2-diacyl-sn-glycero-3-phosphoethanolamine, PE) to phosphatidylmonomethylethanolamine (1,2-diacyl-sn-glycero-3-phospho-N-methylethanolamine, PMME), PMME to phosphatidyldimethylethanolamine (1,2-diacyl-sn-glycero-3-phospho-N,N-dimethylethanolamine, PDME), and PDME to phosphatidylcholine (1,2-diacyl-sn-glycero-3-phosphocholine, PC), producing S-adenosyl-L-homocysteine in each step. Responsible for approximately 30% of hepatic PC with the CDP-choline pathway accounting for the other 70%. Functionally, catalyzes the three sequential steps of the methylation of 1,2-diacyl-sn-glycero-3-phospho-N-methylethanolamine (PMME) to 1,2-diacyl-sn-glycero-3-phospho-N,N-dimethylethanolamine (PDME) more efficiently than isoform 2. Induces increase in PC species with longer polyunsaturated chains than isoform 2. Its function is as follows. Produces a higher increase in the level of PC species containing long chains with three double bonds than isoform 1. The sequence is that of Phosphatidylethanolamine N-methyltransferase from Homo sapiens (Human).